Here is an 832-residue protein sequence, read N- to C-terminus: Protein monoglycylase TTLL8 (832 aa).

Residues Met-1 to Pro-13 show a composition bias toward pro residues. Disordered regions lie at residues Met-1–Ser-84 and Gly-277–Ser-304. 3 stretches are compositionally biased toward basic and acidic residues: residues Gln-46 to Lys-59, Asp-66 to Leu-75, and Lys-280 to Asp-299. Residues Tyr-271–Gly-624 enclose the TTL domain. ATP-binding positions include Lys-397, Arg-403 to Gly-404, Gln-435 to Ile-438, Lys-448 to Asp-450, and Cys-492 to Asn-493. Arg-403 contributes to the a protein binding site. Ser-495 contacts L-glutamate. Residues Asp-570, Glu-583, and Asn-585 each coordinate Mg(2+). Glu-583 serves as a coordination point for ATP.

Mg(2+) is required as a cofactor. Highly expressed in testis. Expressed in brain, heart, kidney, liver, lung, muscle, spleen and trachea. Expressed in sperm flagellum. In the brain, specifically expressed in ependymal cilia.

The protein resides in the cytoplasm. It localises to the cytoskeleton. The protein localises to the cell projection. It is found in the cilium. Its subcellular location is the cilium axoneme. The protein resides in the flagellum axoneme. It catalyses the reaction L-glutamyl-[protein] + glycine + ATP = glycyl-L-glutamyl-[protein] + ADP + phosphate + H(+). In terms of biological role, monoglycylase which modifies both tubulin and non-tubulin proteins, adding a single glycine on the gamma-carboxyl groups of specific glutamate residues to generate monoglycine side chains within the C-terminal tail of target proteins. Not involved in elongation step of the polyglycylation reaction. Preferentially monoglycylates alpha-tubulin over beta-tubulin. Together with TTLL3, mediates microtubule glycylation of primary and motile cilia, which is essential for their stability and maintenance. Together with TTLL3, glycylates sperm flagella which regulates axonemal dynein motor activity, thereby controlling flagellar beat, directional sperm swimming and male fertility. Monoglycylates non-tubulin proteins such as ANP32A, ANP32B, SET, NCL and NAP1. This chain is Protein monoglycylase TTLL8, found in Mus musculus (Mouse).